Here is an 882-residue protein sequence, read N- to C-terminus: Nitrogen regulatory protein areA (882 aa).

The segment covering 1–13 (MSGLTLGGGGSGG) has biased composition (gly residues). Disordered regions lie at residues 1–75 (MSGL…PDSL), 139–191 (KRKE…LTSD), 228–257 (SRKD…SEFG), 325–344 (NNHS…FGLD), 394–422 (STDF…EHSM), 461–545 (NQDQ…DMNG), and 579–675 (MDTP…GPTT). The span at 48-59 (SDFSQLSDDFSF) shows a compositional bias: low complexity. Composition is skewed to polar residues over residues 156-169 (NSVS…QLTS) and 177-191 (PTRQ…LTSD). A compositionally biased stretch (basic residues) spans 325–334 (NNHSSSHHNH). 2 stretches are compositionally biased toward polar residues: residues 394 to 413 (STDF…STPQ) and 492 to 503 (QVLNPNDFSTGA). A compositionally biased stretch (basic and acidic residues) spans 604 to 613 (VRNREQDPRR). Residues 617-642 (ARTTSTPNTAQLLRQSMNANTSHTSP) are compositionally biased toward polar residues. Residues 676–700 (CTNCFTQTTPLWRRNPEGQPLCNAC) form a GATA-type zinc finger. A disordered region spans residues 723 to 871 (RNRSSANSLA…NHSIAGGQGA (149 aa)). Positions 745 to 759 (KNSVQQTTVTTPTSS) are enriched in low complexity. Residues 795–811 (NPTTSSPGQSRGTSSVQ) are compositionally biased toward polar residues. The segment covering 848 to 861 (ALAPAMPPAAANPA) has biased composition (low complexity).

The protein resides in the nucleus. Its function is as follows. Major nitrogen regulatory protein. Positively acting regulatory gene of nitrogen metabolite repression. This Aspergillus niger protein is Nitrogen regulatory protein areA (areA).